The chain runs to 243 residues: Probable 2-phosphosulfolactate phosphatase (243 aa).

Belongs to the ComB family. Mg(2+) serves as cofactor.

It catalyses the reaction (2R)-O-phospho-3-sulfolactate + H2O = (2R)-3-sulfolactate + phosphate. The polypeptide is Probable 2-phosphosulfolactate phosphatase (Synechococcus sp. (strain CC9605)).